The primary structure comprises 296 residues: Cytidine deaminase (296 aa).

2 consecutive CMP/dCMP-type deaminase domains span residues 47-167 (TEAE…FGPK) and 186-296 (DSSD…VDPV). 88–90 (NLE) contacts substrate. H101 provides a ligand contact to Zn(2+). The active-site Proton donor is the E103. 2 residues coordinate Zn(2+): C128 and C131.

Belongs to the cytidine and deoxycytidylate deaminase family. Homodimer. It depends on Zn(2+) as a cofactor.

It carries out the reaction cytidine + H2O + H(+) = uridine + NH4(+). The enzyme catalyses 2'-deoxycytidine + H2O + H(+) = 2'-deoxyuridine + NH4(+). In terms of biological role, this enzyme scavenges exogenous and endogenous cytidine and 2'-deoxycytidine for UMP synthesis. The polypeptide is Cytidine deaminase (Shewanella sp. (strain ANA-3)).